Here is a 180-residue protein sequence, read N- to C-terminus: Crossover junction endodeoxyribonuclease RuvC (180 aa).

Active-site residues include D7, E66, and D138. Mg(2+) contacts are provided by D7, E66, and D138.

This sequence belongs to the RuvC family. As to quaternary structure, homodimer which binds Holliday junction (HJ) DNA. The HJ becomes 2-fold symmetrical on binding to RuvC with unstacked arms; it has a different conformation from HJ DNA in complex with RuvA. In the full resolvosome a probable DNA-RuvA(4)-RuvB(12)-RuvC(2) complex forms which resolves the HJ. The cofactor is Mg(2+).

Its subcellular location is the cytoplasm. The catalysed reaction is Endonucleolytic cleavage at a junction such as a reciprocal single-stranded crossover between two homologous DNA duplexes (Holliday junction).. Functionally, the RuvA-RuvB-RuvC complex processes Holliday junction (HJ) DNA during genetic recombination and DNA repair. Endonuclease that resolves HJ intermediates. Cleaves cruciform DNA by making single-stranded nicks across the HJ at symmetrical positions within the homologous arms, yielding a 5'-phosphate and a 3'-hydroxyl group; requires a central core of homology in the junction. The consensus cleavage sequence is 5'-(A/T)TT(C/G)-3'. Cleavage occurs on the 3'-side of the TT dinucleotide at the point of strand exchange. HJ branch migration catalyzed by RuvA-RuvB allows RuvC to scan DNA until it finds its consensus sequence, where it cleaves and resolves the cruciform DNA. This Burkholderia pseudomallei (strain 668) protein is Crossover junction endodeoxyribonuclease RuvC.